A 331-amino-acid polypeptide reads, in one-letter code: Aromatic 2-oxoacid reductase (331 aa).

NAD(+) is bound by residues 154-155, Asp-175, 205-206, Asn-211, 232-234, and Asp-258; these read RI, AP, and AAR. Arg-234 is a catalytic residue. Glu-263 is an active-site residue. His-295 functions as the Proton donor in the catalytic mechanism.

It belongs to the D-isomer specific 2-hydroxyacid dehydrogenase family.

It catalyses the reaction (R)-3-phenyllactate + NAD(+) = 3-phenylpyruvate + NADH + H(+). The enzyme catalyses (2R)-2-hydroxy-3-(4-hydroxyphenyl)propanoate + NAD(+) = 3-(4-hydroxyphenyl)pyruvate + NADH + H(+). It carries out the reaction 3-(indol-3-yl)lactate + NAD(+) = indole-3-pyruvate + NADH + H(+). It participates in amino-acid degradation. Its function is as follows. Essential for the reductive metabolism of L-phenylalanine, L-tyrosine and L-tryptophan. Catalyzes the conversion of phenylpyruvic acid to phenyllactic acid, 4-hydroxy-phenylpyruvic acid to 4-hydroxy-phenyllactic acid, and indolepyruvic acid to indolelactic acid. The chain is Aromatic 2-oxoacid reductase from Clostridium sporogenes (strain ATCC 7955 / DSM 767 / NBRC 16411 / NCIMB 8053 / NCTC 8594 / PA 3679).